The chain runs to 258 residues: UPF0246 protein YE0603 (258 aa).

It belongs to the UPF0246 family.

In Yersinia enterocolitica serotype O:8 / biotype 1B (strain NCTC 13174 / 8081), this protein is UPF0246 protein YE0603.